A 138-amino-acid chain; its full sequence is Ribosome-binding factor A (138 aa).

The segment covering 1-20 has biased composition (low complexity); that stretch reads MSSRPPSSSGPAGIPKGAPS. Positions 1-21 are disordered; the sequence is MSSRPPSSSGPAGIPKGAPSQ.

It belongs to the RbfA family. In terms of assembly, monomer. Binds 30S ribosomal subunits, but not 50S ribosomal subunits or 70S ribosomes.

The protein localises to the cytoplasm. In terms of biological role, one of several proteins that assist in the late maturation steps of the functional core of the 30S ribosomal subunit. Associates with free 30S ribosomal subunits (but not with 30S subunits that are part of 70S ribosomes or polysomes). Required for efficient processing of 16S rRNA. May interact with the 5'-terminal helix region of 16S rRNA. The protein is Ribosome-binding factor A of Granulibacter bethesdensis (strain ATCC BAA-1260 / CGDNIH1).